Here is a 501-residue protein sequence, read N- to C-terminus: MQVQKLPTGIEGFDDVCQGGLPTARSTLVSGTSGTGKTVFSLQYLHHGICHFDEPGVFVTFEESPLDIIRNAGSFGWDLQELINQDKLFVLDASPDPDGQDVAGNFDLSGLIERISYAIKKYKAKRVAIDSMTAVFQQYDAVYVVRREIFRLIARLKEIGVTTVMTSERIDEYGPIARYGVEEFVSDNVVILRNVLESEKRRRTVEVLKLRGTTHMKGEFPFTMGAEGITVFALGAMRLTQRSSNIRISSGVPDLDDMCGGGYFQDSIILATGATGTGKTMLVSKFIEDAYRNQERAIIFAYEESRAQLLRNATSWGIDFEQMEADGLLKIICAYPESTGLEDHLQIIKTEITEFKPSRMAIDSLSALARGVSLNAFRQFVIGVTGYAKQEEIAGFFTNTAEEFMGSHSITDSHISTITDTILLLQYVEIRGEMARAINVFKMRGSWHDKRIREFIITNEGPEIKDSFTNFEQIFSGAPHRISGEDSISGVFKSLDKREKK.

2 KaiC domains span residues 1 to 232 (MQVQ…ITVF) and 246 to 501 (IRIS…REKK). ATP-binding residues include Gly34, Thr35, Gly36, Lys37, Thr38, Ser74, Lys209, Leu210, Arg211, Thr213, His215, Thr275, Gly276, Thr277, Gly278, Lys279, and Thr280. Thr38 provides a ligand contact to Mg(2+). Mg(2+) is bound by residues Thr280 and Glu303. An ATP-binding site is contributed by Trp316. The residue at position 416 (Ser416) is a Phosphoserine; by autocatalysis. At Thr417 the chain carries Phosphothreonine; by autocatalysis. Residues Arg436, Lys442, Met443, Arg444, Ser446, His448, and Lys450 each contribute to the ATP site.

Belongs to the KaiC family. Homohexamer; hexamerization is dependent on ATP-binding. Component of the KaiBC complex. KaiC interacts with SasA, activating its autokinase function and leading to RpaA activation. It depends on Mg(2+) as a cofactor. In terms of processing, phosphorylated on serine and threonine residues by autocatalysis. Has a 4 step phosphorylation cycle; the autokinase acts first on Thr-417, then Ser-416. When Ser-416 is modified KaiC switches to an autophosphatase mode, acting first on phospho-Thr-417 then phospho-Ser-416.

The enzyme catalyses L-seryl-[protein] + ATP = O-phospho-L-seryl-[protein] + ADP + H(+). It catalyses the reaction L-threonyl-[protein] + ATP = O-phospho-L-threonyl-[protein] + ADP + H(+). It carries out the reaction ATP + H2O = ADP + phosphate + H(+). Its function is as follows. Central component of the KaiBC oscillator complex, which constitutes the main circadian regulator in cyanobacteria. Its composition changes during the circadian cycle to control KaiC phosphorylation. Autophosphorylates and has a weak ATPase activity; ATPase activity defines the circadian period. In Prochlorococcus marinus (strain SARG / CCMP1375 / SS120), this protein is Circadian clock oscillator protein KaiC.